The sequence spans 270 residues: Fluoride-specific ion channel FluC 2 (270 aa).

4 helical membrane passes run 4-24 (IIIL…FIML), 35-55 (LDIL…TALY), 67-87 (IIGT…YGSV), and 96-116 (AFLI…VAVL). Gly-74 and Ser-77 together coordinate Na(+).

The protein belongs to the fluoride channel Fluc/FEX (TC 1.A.43) family.

Its subcellular location is the cell inner membrane. It carries out the reaction fluoride(in) = fluoride(out). Its activity is regulated as follows. Na(+) is not transported, but it plays an essential structural role and its presence is essential for fluoride channel function. Its function is as follows. Fluoride-specific ion channel. Important for reducing fluoride concentration in the cell, thus reducing its toxicity. This Brucella melitensis biotype 1 (strain ATCC 23456 / CCUG 17765 / NCTC 10094 / 16M) protein is Fluoride-specific ion channel FluC 2.